Here is a 386-residue protein sequence, read N- to C-terminus: Succinate--CoA ligase [ADP-forming] subunit beta (386 aa).

Positions 9-244 constitute an ATP-grasp domain; it reads KDILRQFGVP…LDEEDPAEVE (236 aa). ATP is bound by residues K46, 53 to 55, E99, A102, and E107; that span reads GRG. Positions 199 and 213 each coordinate Mg(2+). Substrate contacts are provided by residues N264 and 321-323; that span reads GIM.

It belongs to the succinate/malate CoA ligase beta subunit family. Heterotetramer of two alpha and two beta subunits. Mg(2+) serves as cofactor.

It catalyses the reaction succinate + ATP + CoA = succinyl-CoA + ADP + phosphate. The catalysed reaction is GTP + succinate + CoA = succinyl-CoA + GDP + phosphate. It functions in the pathway carbohydrate metabolism; tricarboxylic acid cycle; succinate from succinyl-CoA (ligase route): step 1/1. Its function is as follows. Succinyl-CoA synthetase functions in the citric acid cycle (TCA), coupling the hydrolysis of succinyl-CoA to the synthesis of either ATP or GTP and thus represents the only step of substrate-level phosphorylation in the TCA. The beta subunit provides nucleotide specificity of the enzyme and binds the substrate succinate, while the binding sites for coenzyme A and phosphate are found in the alpha subunit. The protein is Succinate--CoA ligase [ADP-forming] subunit beta of Delftia acidovorans (strain DSM 14801 / SPH-1).